The primary structure comprises 208 residues: FMN-dependent NADH:quinone oxidoreductase (208 aa).

FMN contacts are provided by residues 17-19 (SNS), 99-102 (MWNL), and 143-146 (SRGG).

This sequence belongs to the azoreductase type 1 family. In terms of assembly, homodimer. The cofactor is FMN.

It catalyses the reaction 2 a quinone + NADH + H(+) = 2 a 1,4-benzosemiquinone + NAD(+). The catalysed reaction is N,N-dimethyl-1,4-phenylenediamine + anthranilate + 2 NAD(+) = 2-(4-dimethylaminophenyl)diazenylbenzoate + 2 NADH + 2 H(+). In terms of biological role, quinone reductase that provides resistance to thiol-specific stress caused by electrophilic quinones. Also exhibits azoreductase activity. Catalyzes the reductive cleavage of the azo bond in aromatic azo compounds to the corresponding amines. The sequence is that of FMN-dependent NADH:quinone oxidoreductase from Staphylococcus aureus (strain bovine RF122 / ET3-1).